A 162-amino-acid polypeptide reads, in one-letter code: Autophagy-related protein 8 (162 aa).

Residues 1-27 (MRSKFKDEHPFEKRKAEAERIRQKYSD) are compositionally biased toward basic and acidic residues. Residues 1-42 (MRSKFKDEHPFEKRKAEAERIRQKYSDRIPPSPHSPASRLIG) are disordered. Gly-157 is lipidated: Phosphatidylethanolamine amidated glycine. The propeptide at 158 to 162 (GFETA) is removed in mature form.

Belongs to the ATG8 family.

The protein localises to the cytoplasmic vesicle. The protein resides in the autophagosome membrane. Its subcellular location is the vacuole membrane. Ubiquitin-like modifier involved in autophagosome formation. With ATG4, mediates the delivery of the autophagosomes to the vacuole via the microtubule cytoskeleton. Required for selective autophagic degradation of the nucleus (nucleophagy) as well as for mitophagy which contributes to regulate mitochondrial quantity and quality by eliminating the mitochondria to a basal level to fulfill cellular energy requirements and preventing excess ROS production. Also participates in membrane fusion events that take place in the early secretory pathway. Also involved in endoplasmic reticulum-specific autophagic process and is essential for the survival of cells subjected to severe ER stress. The ATG8-PE conjugate mediates tethering between adjacent membranes and stimulates membrane hemifusion, leading to expansion of the autophagosomal membrane during autophagy. The protein is Autophagy-related protein 8 of Colletotrichum higginsianum (strain IMI 349063) (Crucifer anthracnose fungus).